The chain runs to 865 residues: Protein translocase subunit SecA (865 aa).

ATP contacts are provided by residues glutamine 85, 103 to 107 (GEGKT), and aspartate 505. 4 residues coordinate Zn(2+): cysteine 847, cysteine 849, cysteine 858, and histidine 859.

This sequence belongs to the SecA family. In terms of assembly, monomer and homodimer. Part of the essential Sec protein translocation apparatus which comprises SecA, SecYEG and auxiliary proteins SecDF. Other proteins may also be involved. It depends on Zn(2+) as a cofactor.

It is found in the cell membrane. It localises to the cytoplasm. The catalysed reaction is ATP + H2O + cellular proteinSide 1 = ADP + phosphate + cellular proteinSide 2.. Part of the Sec protein translocase complex. Interacts with the SecYEG preprotein conducting channel. Has a central role in coupling the hydrolysis of ATP to the transfer of proteins into and across the cell membrane, serving as an ATP-driven molecular motor driving the stepwise translocation of polypeptide chains across the membrane. The chain is Protein translocase subunit SecA from Lactococcus lactis subsp. lactis (strain IL1403) (Streptococcus lactis).